The primary structure comprises 236 residues: Purine nucleoside phosphorylase DeoD-type (236 aa).

A purine D-ribonucleoside is bound at residue His4. Phosphate contacts are provided by residues Gly20, Arg24, Arg43, and 87 to 90 (RVGT). A purine D-ribonucleoside contacts are provided by residues 179–181 (EME) and 203–204 (SD). The active-site Proton donor is Asp204.

The protein belongs to the PNP/UDP phosphorylase family. In terms of assembly, homohexamer; trimer of homodimers.

The catalysed reaction is a purine D-ribonucleoside + phosphate = a purine nucleobase + alpha-D-ribose 1-phosphate. The enzyme catalyses a purine 2'-deoxy-D-ribonucleoside + phosphate = a purine nucleobase + 2-deoxy-alpha-D-ribose 1-phosphate. In terms of biological role, catalyzes the reversible phosphorolytic breakdown of the N-glycosidic bond in the beta-(deoxy)ribonucleoside molecules, with the formation of the corresponding free purine bases and pentose-1-phosphate. This Streptococcus pneumoniae (strain JJA) protein is Purine nucleoside phosphorylase DeoD-type.